We begin with the raw amino-acid sequence, 100 residues long: Pancreatic polypeptide prohormone (100 aa).

The first 29 residues, 1–29 (MAVAYCCLSLFLVSTWVALLLQPLQGTWG), serve as a signal peptide directing secretion. Tyrosine 65 is subject to Tyrosine amide.

It belongs to the NPY family. No icosapeptide-like peptide is cleaved from the C-terminal.

The protein resides in the secreted. Its function is as follows. Hormone secreted by pancreatic cells that acts as a regulator of pancreatic and gastrointestinal functions probably by signaling through the G protein-coupled receptor NPY4R2. This chain is Pancreatic polypeptide prohormone (Ppy), found in Mus musculus (Mouse).